Consider the following 155-residue polypeptide: SsrA-binding protein (155 aa).

The interval 136-155 (REDLKRRQDQRDIQRAMKSY) is disordered.

This sequence belongs to the SmpB family.

It localises to the cytoplasm. In terms of biological role, required for rescue of stalled ribosomes mediated by trans-translation. Binds to transfer-messenger RNA (tmRNA), required for stable association of tmRNA with ribosomes. tmRNA and SmpB together mimic tRNA shape, replacing the anticodon stem-loop with SmpB. tmRNA is encoded by the ssrA gene; the 2 termini fold to resemble tRNA(Ala) and it encodes a 'tag peptide', a short internal open reading frame. During trans-translation Ala-aminoacylated tmRNA acts like a tRNA, entering the A-site of stalled ribosomes, displacing the stalled mRNA. The ribosome then switches to translate the ORF on the tmRNA; the nascent peptide is terminated with the 'tag peptide' encoded by the tmRNA and targeted for degradation. The ribosome is freed to recommence translation, which seems to be the essential function of trans-translation. The protein is SsrA-binding protein of Nostoc punctiforme (strain ATCC 29133 / PCC 73102).